The sequence spans 237 residues: MTRKAVVLYSGGLDSTTCLAIARAEGFEPHAMSFSYGQRHSVELELAKRNARPAGAVEHMVVEFDLRKVGGSALTADIAVPKEGVGDDIPVTYVPARNTIFLSFALGWAEVLGAFDIFIGVNALDYSGYPDCRPEYISAFETMANLATRVGVEGTGRFRIHAPLMRLTKAEIIRKGLALGVDYGLTHSCYDPSPAGVACGLCDSCRLRLKGFAEVGVADPVPYVTGGQGLGGGKETP.

9 to 19 is an ATP binding site; the sequence is YSGGLDSTTCL. Positions 189, 199, 202, and 205 each coordinate Zn(2+).

It belongs to the QueC family. The cofactor is Zn(2+).

The catalysed reaction is 7-carboxy-7-deazaguanine + NH4(+) + ATP = 7-cyano-7-deazaguanine + ADP + phosphate + H2O + H(+). Its pathway is purine metabolism; 7-cyano-7-deazaguanine biosynthesis. Functionally, catalyzes the ATP-dependent conversion of 7-carboxy-7-deazaguanine (CDG) to 7-cyano-7-deazaguanine (preQ(0)). The sequence is that of 7-cyano-7-deazaguanine synthase from Geobacter sulfurreducens (strain ATCC 51573 / DSM 12127 / PCA).